The chain runs to 387 residues: Cytochrome b (387 aa).

4 helical membrane passes run 32 to 52, 76 to 98, 113 to 133, and 179 to 199; these read FGSL…TLAM, WLVR…LHIG, TWAI…LGYV, and FFAL…MHLI. 2 residues coordinate heme b: His82 and His96. The heme b site is built by His183 and His197. Residue His202 coordinates a ubiquinone. 4 helical membrane-spanning segments follow: residues 226–246, 290–310, 322–342, and 349–369; these read FIFK…IFVF, LLGV…PITD, LSKV…QIGA, and FIEF…VIVP.

Belongs to the cytochrome b family. Fungal cytochrome b-c1 complex contains 10 subunits; 3 respiratory subunits, 2 core proteins and 5 low-molecular weight proteins. Cytochrome b-c1 complex is a homodimer. It depends on heme b as a cofactor.

Its subcellular location is the mitochondrion inner membrane. Its function is as follows. Component of the ubiquinol-cytochrome c reductase complex (complex III or cytochrome b-c1 complex) that is part of the mitochondrial respiratory chain. The b-c1 complex mediates electron transfer from ubiquinol to cytochrome c. Contributes to the generation of a proton gradient across the mitochondrial membrane that is then used for ATP synthesis. The chain is Cytochrome b (cob) from Emericella nidulans (Aspergillus nidulans).